Here is a 354-residue protein sequence, read N- to C-terminus: Isopentenyl-diphosphate delta-isomerase (354 aa).

6-7 serves as a coordination point for substrate; sequence RK. Residues 63-65, serine 93, and asparagine 122 contribute to the FMN site; that span reads AMT. Residue 93-95 participates in substrate binding; the sequence is SQR. Glutamine 160 contacts substrate. Residue glutamate 161 coordinates Mg(2+). Residues lysine 192, threonine 221, 273–275, and 294–295 contribute to the FMN site; these read GIR and SQ.

Belongs to the IPP isomerase type 2 family. In terms of assembly, homooctamer. Dimer of tetramers. The cofactor is FMN. Requires NADPH as cofactor. Mg(2+) is required as a cofactor.

The protein resides in the cytoplasm. The enzyme catalyses isopentenyl diphosphate = dimethylallyl diphosphate. In terms of biological role, involved in the biosynthesis of isoprenoids. Catalyzes the 1,3-allylic rearrangement of the homoallylic substrate isopentenyl (IPP) to its allylic isomer, dimethylallyl diphosphate (DMAPP). This is Isopentenyl-diphosphate delta-isomerase from Pyrobaculum islandicum (strain DSM 4184 / JCM 9189 / GEO3).